A 184-amino-acid polypeptide reads, in one-letter code: Exosome complex protein LRP1 (184 aa).

The tract at residues 157–184 is disordered; it reads DSTDHIRKASSKKSKRLDKVGKKKGGKK. Residues 164–184 show a composition bias toward basic residues; the sequence is KASSKKSKRLDKVGKKKGGKK.

The protein belongs to the C1D family. Associates with nuclear form of the RNA exosome complex. Interacts with RRP4, RRP6, RRP45 and RRP46.

The protein resides in the nucleus. Its function is as follows. Required for exosome-dependent processing of pre-rRNA and small nucleolar RNA (snRNA) precursors. Involved in processing of 35S pre-rRNA at the A0, A1 and A2 sites. Required for activity of RRP6 in 7S pre-rRNA processing. Also has a role in 3'-processing of U4 and U5 small nuclear RNAs (snRNAs). Acts as a mRNA export factor. Mediates mRNA degradation upon UV irradiation. Maintains genome integrity where it is involved in both non-homologous end joining (NHEJ) and homologous recombination pathway repair of double strand DNA breaks. During NHEJ, required for joining 3'-overhanging ends. Also involved in telomere length regulation and maintenance. This is Exosome complex protein LRP1 (LRP1) from Saccharomyces cerevisiae (strain ATCC 204508 / S288c) (Baker's yeast).